The following is a 671-amino-acid chain: DNA ligase (671 aa).

Residues Asp32 to Asp36, Ser81 to Leu82, and Glu113 contribute to the NAD(+) site. Lys115 functions as the N6-AMP-lysine intermediate in the catalytic mechanism. NAD(+) contacts are provided by Arg136, Glu173, Lys290, and Lys314. 4 residues coordinate Zn(2+): Cys408, Cys411, Cys426, and Cys432. The 79-residue stretch at Glu593 to Ser671 folds into the BRCT domain.

It belongs to the NAD-dependent DNA ligase family. LigA subfamily. Mg(2+) is required as a cofactor. The cofactor is Mn(2+).

The catalysed reaction is NAD(+) + (deoxyribonucleotide)n-3'-hydroxyl + 5'-phospho-(deoxyribonucleotide)m = (deoxyribonucleotide)n+m + AMP + beta-nicotinamide D-nucleotide.. In terms of biological role, DNA ligase that catalyzes the formation of phosphodiester linkages between 5'-phosphoryl and 3'-hydroxyl groups in double-stranded DNA using NAD as a coenzyme and as the energy source for the reaction. It is essential for DNA replication and repair of damaged DNA. In Escherichia fergusonii (strain ATCC 35469 / DSM 13698 / CCUG 18766 / IAM 14443 / JCM 21226 / LMG 7866 / NBRC 102419 / NCTC 12128 / CDC 0568-73), this protein is DNA ligase.